A 99-amino-acid polypeptide reads, in one-letter code: Large ribosomal subunit protein uL23 (99 aa).

This sequence belongs to the universal ribosomal protein uL23 family. In terms of assembly, part of the 50S ribosomal subunit. Contacts protein L29, and trigger factor when it is bound to the ribosome.

Functionally, one of the early assembly proteins it binds 23S rRNA. One of the proteins that surrounds the polypeptide exit tunnel on the outside of the ribosome. Forms the main docking site for trigger factor binding to the ribosome. This Francisella tularensis subsp. holarctica (strain OSU18) protein is Large ribosomal subunit protein uL23.